A 266-amino-acid chain; its full sequence is Undecaprenyl-diphosphatase (266 aa).

A run of 8 helical transmembrane segments spans residues 1 to 21 (METF…FLPI), 39 to 59 (QGLS…VIYF), 87 to 107 (WWII…KDFI), 111 to 131 (FRNT…LWAA), 144 to 164 (MGWK…IPGT), 183 to 203 (AAAR…ALLV), 218 to 238 (ALGL…HFFL), and 244 to 264 (IGMT…LGLL).

The protein belongs to the UppP family.

It localises to the cell inner membrane. The catalysed reaction is di-trans,octa-cis-undecaprenyl diphosphate + H2O = di-trans,octa-cis-undecaprenyl phosphate + phosphate + H(+). Catalyzes the dephosphorylation of undecaprenyl diphosphate (UPP). Confers resistance to bacitracin. The sequence is that of Undecaprenyl-diphosphatase from Shewanella frigidimarina (strain NCIMB 400).